The primary structure comprises 335 residues: Large ribosomal subunit protein uL10 (335 aa).

The interval 304 to 335 (GAAAPVEEAPVEEKKEEKKEEAAAPAGLGMLF) is disordered. Basic and acidic residues predominate over residues 314-325 (VEEKKEEKKEEA).

Belongs to the universal ribosomal protein uL10 family. As to quaternary structure, part of the 50S ribosomal subunit. Homodimer, it forms part of the ribosomal stalk which helps the ribosome interact with GTP-bound translation factors. Forms both a pentameric L10(L12)2(L12)2 and heptameric L10(L12)2(L12)2(L12)2 complex, where L10 forms an elongated spine to which the L12 dimers bind in a sequential fashion. The proportion of heptameric complexes increases during cell growth.

Forms part of the ribosomal stalk, playing a central role in the interaction of the ribosome with GTP-bound translation factors. In Methanococcus maripaludis (strain DSM 14266 / JCM 13030 / NBRC 101832 / S2 / LL), this protein is Large ribosomal subunit protein uL10.